The sequence spans 340 residues: Ribose-phosphate pyrophosphokinase (340 aa).

Residues 47–49 (NGE) and 106–107 (RQ) contribute to the ATP site. Positions 140 and 182 each coordinate Mg(2+). Residue Lys-206 is part of the active site. D-ribose 5-phosphate contacts are provided by residues Arg-208, Asp-234, and 238–242 (DTAGT).

The protein belongs to the ribose-phosphate pyrophosphokinase family. Class I subfamily. As to quaternary structure, homohexamer. It depends on Mg(2+) as a cofactor.

It localises to the cytoplasm. The enzyme catalyses D-ribose 5-phosphate + ATP = 5-phospho-alpha-D-ribose 1-diphosphate + AMP + H(+). It participates in metabolic intermediate biosynthesis; 5-phospho-alpha-D-ribose 1-diphosphate biosynthesis; 5-phospho-alpha-D-ribose 1-diphosphate from D-ribose 5-phosphate (route I): step 1/1. In terms of biological role, involved in the biosynthesis of the central metabolite phospho-alpha-D-ribosyl-1-pyrophosphate (PRPP) via the transfer of pyrophosphoryl group from ATP to 1-hydroxyl of ribose-5-phosphate (Rib-5-P). The polypeptide is Ribose-phosphate pyrophosphokinase (Bifidobacterium longum (strain NCC 2705)).